The primary structure comprises 156 residues: Peptide deformylase 1 (156 aa).

C90 and H132 together coordinate Fe cation. Residue E133 is part of the active site. H136 serves as a coordination point for Fe cation.

The protein belongs to the polypeptide deformylase family. Fe(2+) serves as cofactor.

The enzyme catalyses N-terminal N-formyl-L-methionyl-[peptide] + H2O = N-terminal L-methionyl-[peptide] + formate. Removes the formyl group from the N-terminal Met of newly synthesized proteins. Requires at least a dipeptide for an efficient rate of reaction. N-terminal L-methionine is a prerequisite for activity but the enzyme has broad specificity at other positions. This is Peptide deformylase 1 from Bacillus cereus (strain ATCC 14579 / DSM 31 / CCUG 7414 / JCM 2152 / NBRC 15305 / NCIMB 9373 / NCTC 2599 / NRRL B-3711).